We begin with the raw amino-acid sequence, 210 residues long: Proteasome subunit beta (210 aa).

Positions 1 to 9 (MDNDKYLKG) are cleaved as a propeptide — removed in mature form; by autocatalysis. The active-site Nucleophile is Thr-10.

The protein belongs to the peptidase T1B family. The 20S proteasome core is composed of 14 alpha and 14 beta subunits that assemble into four stacked heptameric rings, resulting in a barrel-shaped structure. The two inner rings, each composed of seven catalytic beta subunits, are sandwiched by two outer rings, each composed of seven alpha subunits. The catalytic chamber with the active sites is on the inside of the barrel. Has a gated structure, the ends of the cylinder being occluded by the N-termini of the alpha-subunits. Is capped at one or both ends by the proteasome regulatory ATPase, PAN.

The protein resides in the cytoplasm. It catalyses the reaction Cleavage of peptide bonds with very broad specificity.. With respect to regulation, the formation of the proteasomal ATPase PAN-20S proteasome complex, via the docking of the C-termini of PAN into the intersubunit pockets in the alpha-rings, triggers opening of the gate for substrate entry. Interconversion between the open-gate and close-gate conformations leads to a dynamic regulation of the 20S proteasome proteolysis activity. Its function is as follows. Component of the proteasome core, a large protease complex with broad specificity involved in protein degradation. This Methanosarcina mazei (strain ATCC BAA-159 / DSM 3647 / Goe1 / Go1 / JCM 11833 / OCM 88) (Methanosarcina frisia) protein is Proteasome subunit beta.